The chain runs to 763 residues: MRFTLKKIFFVFLTLLIISIGYLLLQSVDLQRIRELLHDSEKFDLESLKQASLEIRKEIHYTNYLFSGYDNFTQQFSDEETLKQTSLNDKCKLVFTQWKESHPDFEFKTFEPEYERYDKSSDRKELFFKERINQLRKRFEKDSNNKNKQFTLSRQDNKTISQEYMEHVNRSKNVLQFMADFVSMMRLYGKCFFGRELDDELKSIYNEFRGKLFPFISSQAPKFRKSGETEEFGWPIYDNENNIIDRKTEFGDNPIEFLQKNSKGKGIVISVSTRYAKDAMRLIKILRALNNRLPIQIIYKNDITKKNIELLEFAAVATPEELFDPETIRDGAKFMPELNLLEHYKNYGSEFPIQDLTFVNIAGCVSRPYRFSFPGYSNKILAMLYSSFEEIILFDADVVPTVNPQEFFDSKYYKSSGTYFFQDRSLRDFNDFIETNFFSTLFPSNEKSIETIFDIPRVGEKTFNNKYMTGWRHYQEAGVVAYNKMQHFLGILMMFPLALWSEPVQSSIWGDKEMYWLGLSMAGDENYEFNKYAAASVGEKTTEQKYKYYPNSDSNEVCSTHPGHIDDNGRLLWINSGFSYCKKNGYFRDKGKFPFSTFELNDLVELYNSPIKIRAGLVPPDLPNQREPGSPPDTKPEMEFRKSWKSRKKDTDEINEKLPEGQEPYDFISEWGPQKGWVKNGICSGYYYCAYDKITSYSSEKEFDTGTLFEFDTKSCELYDYLSKIWHTGGSKMKPKVKLETEKLGTGSDKEQXKDATTVRLRI.

Topologically, residues 1-7 (MRFTLKK) are cytoplasmic. A helical transmembrane segment spans residues 8–28 (IFFVFLTLLIISIGYLLLQSV). Residues 29 to 763 (DLQRIRELLH…KDATTVRLRI (735 aa)) lie on the Lumenal side of the membrane. N-linked (GlcNAc...) asparagine glycans are attached at residues Asn-71, Asn-157, and Asn-169. Residues 617 to 659 (LVPPDLPNQREPGSPPDTKPEMEFRKSWKSRKKDTDEINEKLP) form a disordered region. Positions 649–659 (KDTDEINEKLP) are enriched in basic and acidic residues.

This sequence belongs to the MNN1/MNT family.

It localises to the golgi apparatus membrane. The protein operates within protein modification; protein glycosylation. In terms of biological role, responsible for addition of the terminal mannose residues to the outer chain of core N-linked polysaccharides and to O-linked mannotriose. Implicated in late Golgi modifications. This Candida albicans (strain SC5314 / ATCC MYA-2876) (Yeast) protein is Putative alpha-1,3-mannosyltransferase MNN15 (MNN15).